Reading from the N-terminus, the 203-residue chain is Small ribosomal subunit protein uS5 (203 aa).

One can recognise an S5 DRBM domain in the interval 51–114 (LEDEVLDITM…ENAKLNVVRI (64 aa)).

The protein belongs to the universal ribosomal protein uS5 family. As to quaternary structure, part of the 30S ribosomal subunit. Contacts protein S4.

Its function is as follows. With S4 and S12 plays an important role in translational accuracy. The protein is Small ribosomal subunit protein uS5 of Methanothrix thermoacetophila (strain DSM 6194 / JCM 14653 / NBRC 101360 / PT) (Methanosaeta thermophila).